Here is a 413-residue protein sequence, read N- to C-terminus: Cardiolipin synthase B (413 aa).

2 PLD phosphodiesterase domains span residues isoleucine 108 to histidine 135 and arginine 285 to serine 312. Catalysis depends on residues histidine 113, lysine 115, aspartate 120, histidine 290, lysine 292, and aspartate 297. The tract at residues alanine 388–proline 413 is disordered.

Belongs to the phospholipase D family. Cardiolipin synthase subfamily. ClsB sub-subfamily.

It is found in the cell membrane. The enzyme catalyses 2 a 1,2-diacyl-sn-glycero-3-phospho-(1'-sn-glycerol) = a cardiolipin + glycerol. Its function is as follows. Catalyzes the phosphatidyl group transfer from one phosphatidylglycerol molecule to another to form cardiolipin (CL) (diphosphatidylglycerol) and glycerol. This is Cardiolipin synthase B from Salmonella typhimurium (strain LT2 / SGSC1412 / ATCC 700720).